We begin with the raw amino-acid sequence, 140 residues long: MAVQRTFSILKPDATERNLTGAINALIEKAGLRIVAQKRIRMTREQAETFYAVHKERPFFGELVDFMISGPVVVQVLEGEDAVLKHRDVMGATDPSKAADGTIRKLHAKSIGENSVHGSDAPETAAIEIAQFFSGNEIVG.

Lys-11, Phe-59, Arg-87, Thr-93, Arg-104, and Asn-114 together coordinate ATP. His-117 (pros-phosphohistidine intermediate) is an active-site residue.

Belongs to the NDK family. Homotetramer. The cofactor is Mg(2+).

Its subcellular location is the cytoplasm. It carries out the reaction a 2'-deoxyribonucleoside 5'-diphosphate + ATP = a 2'-deoxyribonucleoside 5'-triphosphate + ADP. The enzyme catalyses a ribonucleoside 5'-diphosphate + ATP = a ribonucleoside 5'-triphosphate + ADP. In terms of biological role, major role in the synthesis of nucleoside triphosphates other than ATP. The ATP gamma phosphate is transferred to the NDP beta phosphate via a ping-pong mechanism, using a phosphorylated active-site intermediate. This Rhodopseudomonas palustris (strain BisA53) protein is Nucleoside diphosphate kinase.